The following is a 432-amino-acid chain: Glutamate-1-semialdehyde 2,1-aminomutase 1 (432 aa).

Lys-268 carries the post-translational modification N6-(pyridoxal phosphate)lysine.

It belongs to the class-III pyridoxal-phosphate-dependent aminotransferase family. HemL subfamily. Homodimer. The cofactor is pyridoxal 5'-phosphate.

It localises to the cytoplasm. The catalysed reaction is (S)-4-amino-5-oxopentanoate = 5-aminolevulinate. Its pathway is porphyrin-containing compound metabolism; protoporphyrin-IX biosynthesis; 5-aminolevulinate from L-glutamyl-tRNA(Glu): step 2/2. The protein is Glutamate-1-semialdehyde 2,1-aminomutase 1 of Bacillus cereus (strain B4264).